Here is a 158-residue protein sequence, read N- to C-terminus: NAD(P)H-quinone oxidoreductase subunit N (158 aa).

This sequence belongs to the complex I NdhN subunit family. As to quaternary structure, NDH-1 can be composed of about 15 different subunits; different subcomplexes with different compositions have been identified which probably have different functions.

It localises to the cellular thylakoid membrane. The enzyme catalyses a plastoquinone + NADH + (n+1) H(+)(in) = a plastoquinol + NAD(+) + n H(+)(out). It carries out the reaction a plastoquinone + NADPH + (n+1) H(+)(in) = a plastoquinol + NADP(+) + n H(+)(out). Functionally, NDH-1 shuttles electrons from an unknown electron donor, via FMN and iron-sulfur (Fe-S) centers, to quinones in the respiratory and/or the photosynthetic chain. The immediate electron acceptor for the enzyme in this species is believed to be plastoquinone. Couples the redox reaction to proton translocation, and thus conserves the redox energy in a proton gradient. Cyanobacterial NDH-1 also plays a role in inorganic carbon-concentration. The protein is NAD(P)H-quinone oxidoreductase subunit N of Nostoc punctiforme (strain ATCC 29133 / PCC 73102).